The primary structure comprises 648 residues: Mitochondrial Rho GTPase 3 (648 aa).

The Cytoplasmic portion of the chain corresponds to Met-1 to Ser-621. At Ser-11 the chain carries Phosphoserine. In terms of domain architecture, Miro 1 spans Pro-12–Asp-179. 2 consecutive EF-hand domains span residues Arg-195–Thr-230 and Val-316–Ser-351. 9 residues coordinate Ca(2+): Asp-208, Asn-210, Asp-212, Glu-219, Asp-329, Asn-331, Asp-333, Asn-335, and Glu-340. The Miro 2 domain occupies Arg-425–Asn-599. A helical membrane pass occupies residues Leu-622–Ala-644. Topologically, residues Arg-645–Ser-648 are mitochondrial intermembrane.

The protein belongs to the mitochondrial Rho GTPase family. In terms of tissue distribution, expressed at very low levels in roots, leaves, stems, flowers and siliques.

Its subcellular location is the mitochondrion outer membrane. Mitochondrial GTPase that may be involved in mitochondrion development. This chain is Mitochondrial Rho GTPase 3, found in Arabidopsis thaliana (Mouse-ear cress).